A 316-amino-acid chain; its full sequence is Acetyl-coenzyme A carboxylase carboxyl transferase subunit alpha (316 aa).

In terms of domain architecture, CoA carboxyltransferase C-terminal spans 39-293; that stretch reads RLQDKSKALT…RGELLTQLKM (255 aa).

Belongs to the AccA family. Acetyl-CoA carboxylase is a heterohexamer composed of biotin carboxyl carrier protein (AccB), biotin carboxylase (AccC) and two subunits each of ACCase subunit alpha (AccA) and ACCase subunit beta (AccD).

The protein localises to the cytoplasm. It catalyses the reaction N(6)-carboxybiotinyl-L-lysyl-[protein] + acetyl-CoA = N(6)-biotinyl-L-lysyl-[protein] + malonyl-CoA. It participates in lipid metabolism; malonyl-CoA biosynthesis; malonyl-CoA from acetyl-CoA: step 1/1. In terms of biological role, component of the acetyl coenzyme A carboxylase (ACC) complex. First, biotin carboxylase catalyzes the carboxylation of biotin on its carrier protein (BCCP) and then the CO(2) group is transferred by the carboxyltransferase to acetyl-CoA to form malonyl-CoA. The sequence is that of Acetyl-coenzyme A carboxylase carboxyl transferase subunit alpha from Pseudomonas aeruginosa (strain LESB58).